We begin with the raw amino-acid sequence, 214 residues long: Large ribosomal subunit protein uL4c (214 aa).

Residues 42–81 form a disordered region; that stretch reads VKQSNEKRQGSANTKTRSEVRGGGRKPWRQKGTGRARAGS. Positions 64–75 are enriched in basic residues; the sequence is GGRKPWRQKGTG.

The protein belongs to the universal ribosomal protein uL4 family. Part of the 50S ribosomal subunit.

The protein resides in the plastid. It localises to the chloroplast. Its function is as follows. Probably binds the 23S rRNA. The chain is Large ribosomal subunit protein uL4c (rpl4) from Pyropia yezoensis (Susabi-nori).